The following is a 908-amino-acid chain: Protein translocase subunit SecA (908 aa).

ATP contacts are provided by residues glutamine 87, 105–109 (GEGKT), and aspartate 512. Residues 860–908 (AESLVGSSDEHEAVTAQAPMIRDGEKVGRNDPCPCGSGRKYKQCHGKLS) form a disordered region. Zn(2+) is bound by residues cysteine 892, cysteine 894, cysteine 903, and histidine 904. A compositionally biased stretch (basic residues) spans 898 to 908 (RKYKQCHGKLS).

This sequence belongs to the SecA family. In terms of assembly, monomer and homodimer. Part of the essential Sec protein translocation apparatus which comprises SecA, SecYEG and auxiliary proteins SecDF-YajC and YidC. It depends on Zn(2+) as a cofactor.

The protein localises to the cell inner membrane. Its subcellular location is the cytoplasm. It carries out the reaction ATP + H2O + cellular proteinSide 1 = ADP + phosphate + cellular proteinSide 2.. Part of the Sec protein translocase complex. Interacts with the SecYEG preprotein conducting channel. Has a central role in coupling the hydrolysis of ATP to the transfer of proteins into and across the cell membrane, serving both as a receptor for the preprotein-SecB complex and as an ATP-driven molecular motor driving the stepwise translocation of polypeptide chains across the membrane. The polypeptide is Protein translocase subunit SecA (Shewanella baltica (strain OS155 / ATCC BAA-1091)).